The chain runs to 277 residues: Caspase-3 (277 aa).

Position 1 is an N-acetylmethionine (Met-1). Propeptides lie at residues 1 to 9 and 10 to 28; these read MENSENSVD and AKSIKNSETKIFHGSKSMD. Lys-11 is modified (N6-acetyllysine). The residue at position 26 (Ser-26) is a Phosphoserine. Residues His-121 and Cys-163 contribute to the active site. The residue at position 163 (Cys-163) is an S-nitrosocysteine; in inhibited form.

The protein belongs to the peptidase C14A family. As to quaternary structure, heterotetramer that consists of two anti-parallel arranged heterodimers, each one formed by a 17 kDa (p17) and a 12 kDa (p12) subunit. Interacts with BIRC6/bruce. Post-translationally, cleavage by granzyme B, caspase-6, caspase-8 and caspase-10 generates the two active subunits. Additional processing of the propeptides is likely due to the autocatalytic activity of the activated protease. Active heterodimers between the small subunit of caspase-7 protease and the large subunit of caspase-3 also occur and vice versa. In terms of processing, S-nitrosylated on its catalytic site cysteine in unstimulated cell lines and denitrosylated upon activation of the Fas apoptotic pathway, associated with an increase in intracellular caspase activity. Fas therefore activates caspase-3 not only by inducing the cleavage of the caspase zymogen to its active subunits, but also by stimulating the denitrosylation of its active site thiol. Ubiquitinated by BIRC6; this activity is inhibited by DIABLO/SMAC.

The protein resides in the cytoplasm. The catalysed reaction is Strict requirement for an Asp residue at positions P1 and P4. It has a preferred cleavage sequence of Asp-Xaa-Xaa-Asp-|- with a hydrophobic amino-acid residue at P2 and a hydrophilic amino-acid residue at P3, although Val or Ala are also accepted at this position.. With respect to regulation, inhibited by BIRC6; following inhibition of BIRC6-caspase binding by DIABLO/SMAC, BIRC6 is subjected to caspase cleavage, leading to an increase in active caspases. Involved in the activation cascade of caspases responsible for apoptosis execution. At the onset of apoptosis, it proteolytically cleaves poly(ADP-ribose) polymerase PARP1 at a '216-Asp-|-Gly-217' bond. Cleaves and activates sterol regulatory element binding proteins (SREBPs) between the basic helix-loop-helix leucine zipper domain and the membrane attachment domain. Cleaves and activates caspase-6, -7 and -9 (CASP6, CASP7 and CASP9, respectively). Cleaves and inactivates interleukin-18 (IL18). Triggers cell adhesion in sympathetic neurons through RET cleavage. Cleaves IL-1 beta between an Asp and an Ala, releasing the mature cytokine which is involved in a variety of inflammatory processes. Cleaves and inhibits serine/threonine-protein kinase AKT1 in response to oxidative stress. Acts as an inhibitor of type I interferon production during virus-induced apoptosis by mediating cleavage of antiviral proteins CGAS, IRF3 and MAVS, thereby preventing cytokine overproduction. Also involved in pyroptosis by mediating cleavage and activation of gasdermin-E (GSDME). Cleaves XRCC4 and phospholipid scramblase proteins XKR4, XKR8 and XKR9, leading to promote phosphatidylserine exposure on apoptotic cell surface. Cleaves BIRC6 following inhibition of BIRC6-caspase binding by DIABLO/SMAC. This is Caspase-3 (CASP3) from Felis catus (Cat).